A 402-amino-acid polypeptide reads, in one-letter code: MSKRTLASLTAADLEGKRVLVRVDFNVPLDGNGKITDDTRIRAALPTIRYLSESGAKVILVSHFGRPKGKPVESMRLTPVAERLSELLGRPVVKTTDAVGAGAEAQVAATSNGQVVLLENVRFHAEEEANDAEFAKALASLADIYVNDAFGAAHRAHAPTAGVTEYLSPCVAGYLLEKELQYLQAAIDNPQRPLAAIVGGSKVSSKIGVIETLLDKCDKLLIGGGMIFTFYKAQGLSVGGSLVEEDKLDLARSLMAKAQEKGVQLLLPVDVVVADKFAPDANAKTVAIDAIPDGWMGLDIGPESVKQFEGALADCRSVIWNGPMGVFEFDQFAVGTEAIARSLAGLTRKGATTIIGGGDSVAAVEKVGVASEMSHISTGGGASLELLEGKVLPGVAALDDAA.

Residues aspartate 24 to asparagine 26, arginine 40, histidine 63 to arginine 66, arginine 122, and arginine 155 each bind substrate. ATP-binding positions include lysine 206, glycine 297, glutamate 328, and glycine 357–serine 360.

It belongs to the phosphoglycerate kinase family. Monomer.

It is found in the cytoplasm. It carries out the reaction (2R)-3-phosphoglycerate + ATP = (2R)-3-phospho-glyceroyl phosphate + ADP. The protein operates within carbohydrate degradation; glycolysis; pyruvate from D-glyceraldehyde 3-phosphate: step 2/5. This chain is Phosphoglycerate kinase, found in Synechococcus sp. (strain ATCC 27144 / PCC 6301 / SAUG 1402/1) (Anacystis nidulans).